The following is a 51-amino-acid chain: Large ribosomal subunit protein bL33 (51 aa).

This sequence belongs to the bacterial ribosomal protein bL33 family.

This is Large ribosomal subunit protein bL33 from Ruthia magnifica subsp. Calyptogena magnifica.